A 293-amino-acid polypeptide reads, in one-letter code: Transcription initiation factor IIB 2 (293 aa).

Residues 1–31 form a TFIIB-type zinc finger; that stretch reads MKCPYCKTDNAITYDVEKGMYVCTNCASVIE. Zn(2+)-binding residues include Cys3, Cys6, Cys23, and Cys26. 2 consecutive repeat copies span residues 107-193 and 204-285.

This sequence belongs to the TFIIB family.

Stabilizes TBP binding to an archaeal box-A promoter. Also responsible for recruiting RNA polymerase II to the pre-initiation complex (DNA-TBP-TFIIB). In Saccharolobus solfataricus (strain ATCC 35092 / DSM 1617 / JCM 11322 / P2) (Sulfolobus solfataricus), this protein is Transcription initiation factor IIB 2.